The chain runs to 266 residues: Cell division protein FtsQ (266 aa).

The Cytoplasmic portion of the chain corresponds to 1 to 31 (MRQKTSSNKKKQKNTNNISLRRKLGLMYKKA). A helical transmembrane segment spans residues 32–52 (ILGLKIVLMIFVCLFVFTKYF). The Periplasmic segment spans residues 53–266 (TSIKTYLITN…DRNKYYIQKY (214 aa)). In terms of domain architecture, POTRA spans 72-140 (FRLENVIIEG…NTVYIKLFER (69 aa)).

The protein belongs to the FtsQ/DivIB family. FtsQ subfamily.

The protein resides in the cell inner membrane. Essential cell division protein. The polypeptide is Cell division protein FtsQ (Rickettsia typhi (strain ATCC VR-144 / Wilmington)).